Here is a 227-residue protein sequence, read N- to C-terminus: Ribonuclease 3 (227 aa).

Positions 6-128 (ASDYQQRIGY…VIAAIYLDAD (123 aa)) constitute an RNase III domain. Residue Glu-41 coordinates Mg(2+). Asp-45 is an active-site residue. Asp-114 and Glu-117 together coordinate Mg(2+). Residue Glu-117 is part of the active site. In terms of domain architecture, DRBM spans 155–225 (DPKTRLQEWL…ASHAIDQLDS (71 aa)). Residues 203 to 212 (GEGSSRRLAE) are compositionally biased toward basic and acidic residues. The segment at 203–227 (GEGSSRRLAEQDAASHAIDQLDSNK) is disordered.

It belongs to the ribonuclease III family. Homodimer. It depends on Mg(2+) as a cofactor.

The protein localises to the cytoplasm. The enzyme catalyses Endonucleolytic cleavage to 5'-phosphomonoester.. Functionally, digests double-stranded RNA. Involved in the processing of primary rRNA transcript to yield the immediate precursors to the large and small rRNAs (23S and 16S). Processes some mRNAs, and tRNAs when they are encoded in the rRNA operon. Processes pre-crRNA and tracrRNA of type II CRISPR loci if present in the organism. This Xylella fastidiosa (strain 9a5c) protein is Ribonuclease 3.